Here is a 234-residue protein sequence, read N- to C-terminus: NAD-dependent protein deacylase (234 aa).

The Deacetylase sirtuin-type domain maps to 1–234; it reads MKNLVILSGA…IEMASQEMLK (234 aa). An NAD(+)-binding site is contributed by 9–28; sequence GAGISAESGIKTFRDAGGLW. Positions 53 and 56 each coordinate substrate. Residue 86–89 participates in NAD(+) binding; it reads QNVD. The active-site Proton acceptor is His-104. Residues 169 to 171 and Met-217 contribute to the NAD(+) site; that span reads GTS.

It belongs to the sirtuin family. Class III subfamily.

It is found in the cytoplasm. The catalysed reaction is N(6)-acetyl-L-lysyl-[protein] + NAD(+) + H2O = 2''-O-acetyl-ADP-D-ribose + nicotinamide + L-lysyl-[protein]. It catalyses the reaction N(6)-succinyl-L-lysyl-[protein] + NAD(+) + H2O = 2''-O-succinyl-ADP-D-ribose + nicotinamide + L-lysyl-[protein]. In terms of biological role, NAD-dependent lysine deacetylase and desuccinylase that specifically removes acetyl and succinyl groups on target proteins. Modulates the activities of several proteins which are inactive in their acylated form. The chain is NAD-dependent protein deacylase from Helicobacter pylori (strain J99 / ATCC 700824) (Campylobacter pylori J99).